The primary structure comprises 323 residues: Ankyrin repeat and SOCS box protein 11 (323 aa).

7 ANK repeats span residues Ala64 to Leu93, Asn97 to Ala126, His130 to Leu159, Tyr162 to Gln191, Gln195 to His224, Trp227 to Leu256, and Gln260 to Gln289. Positions Ser273–Gln323 constitute an SOCS box domain.

Belongs to the ankyrin SOCS box (ASB) family. In terms of assembly, substrate-recognition component of the ECS(ASB11) complex, composed of ASB11, CUL5, ELOB, ELOC and RNF7/RBX2.

It localises to the endoplasmic reticulum. The protein operates within protein modification; protein ubiquitination. Its function is as follows. Substrate-recognition component of a cullin-5-RING E3 ubiquitin-protein ligase complex (ECS complex, also named CRL5 complex), which mediates the ubiquitination and subsequent proteasomal degradation of target proteins, such as BIK, DIRAS2 and RPN1. The ECS(ASB11) complex acts as a regulator of the endoplasmic reticulum unfolded protein response by mediating ubiquitination and degradation of BIK. In Mus musculus (Mouse), this protein is Ankyrin repeat and SOCS box protein 11 (Asb11).